The chain runs to 476 residues: Ribulose bisphosphate carboxylase large chain (476 aa).

Positions 124 and 174 each coordinate substrate. Catalysis depends on Lys176, which acts as the Proton acceptor. Residue Lys178 coordinates substrate. Lys202, Asp204, and Glu205 together coordinate Mg(2+). Lys202 carries the N6-carboxylysine modification. His295 acts as the Proton acceptor in catalysis. Substrate contacts are provided by Arg296, His328, and Ser380.

It belongs to the RuBisCO large chain family. Type I subfamily. In terms of assembly, heterohexadecamer of 8 large chains and 8 small chains; disulfide-linked. The disulfide link is formed within the large subunit homodimers. It depends on Mg(2+) as a cofactor. The disulfide bond which can form in the large chain dimeric partners within the hexadecamer appears to be associated with oxidative stress and protein turnover.

It is found in the carboxysome. It catalyses the reaction 2 (2R)-3-phosphoglycerate + 2 H(+) = D-ribulose 1,5-bisphosphate + CO2 + H2O. It carries out the reaction D-ribulose 1,5-bisphosphate + O2 = 2-phosphoglycolate + (2R)-3-phosphoglycerate + 2 H(+). Its function is as follows. RuBisCO catalyzes two reactions: the carboxylation of D-ribulose 1,5-bisphosphate, the primary event in carbon dioxide fixation, as well as the oxidative fragmentation of the pentose substrate in the photorespiration process. Both reactions occur simultaneously and in competition at the same active site. This Acaryochloris marina (strain MBIC 11017) protein is Ribulose bisphosphate carboxylase large chain.